The following is a 569-amino-acid chain: Sugar transporter STL1 (569 aa).

Residues 1–29 (MKDLKLSNFKGKFISRTSHWGLTGKKLRY) are Cytoplasmic-facing. Residues 30-50 (FITIASMTGFSLFGYDQGLMA) form a helical membrane-spanning segment. The Extracellular portion of the chain corresponds to 51 to 79 (SLITGKQFNYEFPATKENGDHDRHATVVQ). A helical membrane pass occupies residues 80 to 100 (GATTSCYELGCFAGSLFVMFC). The Cytoplasmic portion of the chain corresponds to 101 to 107 (GERIGRK). The chain crosses the membrane as a helical span at residues 108–128 (PLILMGSVITIIGAVISTCAF). Arg129 is a topological domain (extracellular). Residues 130 to 150 (GYWALGQFIIGRVVTGVGTGL) form a helical membrane-spanning segment. The Cytoplasmic portion of the chain corresponds to 151-168 (NTSTIPVWQSEMSKAENR). The helical transmembrane segment at 169 to 189 (GLLVNLEGSTIAFGTMIAYWI) threads the bilayer. At 190–203 (DFGLSYTNSSVQWR) the chain is on the extracellular side. Residue Asn197 is glycosylated (N-linked (GlcNAc...) asparagine). A helical membrane pass occupies residues 204-224 (FPVSMQIVFALFLLAFMIKLP). The Cytoplasmic segment spans residues 225–291 (ESPRWLISQS…SRGRSQNLQR (67 aa)). A helical transmembrane segment spans residues 292-312 (ALIAASTQFFQQFTGCNAAIY). Topologically, residues 313 to 330 (YSTVLFNKTIKLDYRLSM) are extracellular. N-linked (GlcNAc...) asparagine glycosylation occurs at Asn319. A helical transmembrane segment spans residues 331–351 (IIGGVFATIYALSTIGSFFLI). At 352–358 (EKLGRRK) the chain is on the cytoplasmic side. Residues 359–379 (LFLLGATGQAVSFTITFACLV) traverse the membrane as a helical segment. Residues 380 to 389 (KENKENARGA) lie on the Extracellular side of the membrane. A helical transmembrane segment spans residues 390-410 (AVGLFLFITFFGLSLLSLPWI). The Cytoplasmic segment spans residues 411–426 (YPPEIASMKVRASTNA). Residues 427–447 (FSTCTNWLCNFAVVMFTPIFI) form a helical membrane-spanning segment. Over 448-453 (GQSGWG) the chain is Extracellular. A helical membrane pass occupies residues 454–474 (CYLFFAVMNYLYIPVIFFFYP). Topologically, residues 475–569 (ETAGRSLEEI…TVNDKANFEG (95 aa)) are cytoplasmic. A compositionally biased stretch (acidic residues) spans 524-533 (DDEMEKEDFG). Residues 524-569 (DDEMEKEDFGEDRVEDTYNQINGDNSSSSSNIKNEDTVNDKANFEG) are disordered. Basic and acidic residues predominate over residues 556–569 (KNEDTVNDKANFEG).

This sequence belongs to the major facilitator superfamily. Sugar transporter (TC 2.A.1.1) family.

Its subcellular location is the membrane. This Saccharomyces cerevisiae (strain ATCC 204508 / S288c) (Baker's yeast) protein is Sugar transporter STL1 (STL1).